The sequence spans 349 residues: N-acetyl-gamma-glutamyl-phosphate reductase (349 aa).

Cys-149 is a catalytic residue.

This sequence belongs to the NAGSA dehydrogenase family. Type 1 subfamily.

Its subcellular location is the cytoplasm. The enzyme catalyses N-acetyl-L-glutamate 5-semialdehyde + phosphate + NADP(+) = N-acetyl-L-glutamyl 5-phosphate + NADPH + H(+). Its pathway is amino-acid biosynthesis; L-arginine biosynthesis; N(2)-acetyl-L-ornithine from L-glutamate: step 3/4. In terms of biological role, catalyzes the NADPH-dependent reduction of N-acetyl-5-glutamyl phosphate to yield N-acetyl-L-glutamate 5-semialdehyde. This chain is N-acetyl-gamma-glutamyl-phosphate reductase, found in Acinetobacter baumannii (strain SDF).